The primary structure comprises 173 residues: RNA pyrophosphohydrolase (173 aa).

The region spanning 6–149 is the Nudix hydrolase domain; the sequence is GYRPNVGIIL…KRHVYRRALR (144 aa). A Nudix box motif is present at residues 38–59; sequence GGIRRDESPLDAMYRELAEETG.

The protein belongs to the Nudix hydrolase family. RppH subfamily. A divalent metal cation serves as cofactor.

Accelerates the degradation of transcripts by removing pyrophosphate from the 5'-end of triphosphorylated RNA, leading to a more labile monophosphorylated state that can stimulate subsequent ribonuclease cleavage. The chain is RNA pyrophosphohydrolase from Thioalkalivibrio sulfidiphilus (strain HL-EbGR7).